The following is a 1107-amino-acid chain: DNA-directed RNA polymerase subunit beta (1107 aa).

The span at 1062–1075 (DNEGNEKEKARELG) shows a compositional bias: basic and acidic residues. The segment at 1062 to 1081 (DNEGNEKEKARELGLDLPDN) is disordered.

It belongs to the RNA polymerase beta chain family. As to quaternary structure, the RNAP catalytic core consists of 2 alpha, 1 beta, 1 beta' and 1 omega subunit. When a sigma factor is associated with the core the holoenzyme is formed, which can initiate transcription.

The enzyme catalyses RNA(n) + a ribonucleoside 5'-triphosphate = RNA(n+1) + diphosphate. In terms of biological role, DNA-dependent RNA polymerase catalyzes the transcription of DNA into RNA using the four ribonucleoside triphosphates as substrates. The polypeptide is DNA-directed RNA polymerase subunit beta (Syntrophomonas wolfei subsp. wolfei (strain DSM 2245B / Goettingen)).